Here is a 776-residue protein sequence, read N- to C-terminus: Reticulon-1 (776 aa).

4 disordered regions span residues 1 to 103, 136 to 168, 204 to 244, and 285 to 580; these read MAAP…GEGS, ISESPEELGTPGSSLPDVPGIESRGLFSSDSGI, EVKH…EPAP, and LTEI…APPP. Residues 204–240 show a composition bias toward basic and acidic residues; it reads EVKHQEQNHPELEDKDLDFKNKDTDISIKPEGVREPD. Position 327 is a phosphoserine (serine 327). The segment covering 328-341 has biased composition (low complexity); it reads PGSITPPSSGTEPS. Phosphoserine occurs at positions 350, 352, and 487. A compositionally biased stretch (basic and acidic residues) spans 497–511; the sequence is AIREETGVRAEERAP. One can recognise a Reticulon domain in the interval 589 to 776; it reads AIDLLYWRDI…KIPGAKRHAE (188 aa). Helical transmembrane passes span 603–623 and 705–725; these read IVFGSFLLLLFSLTQFSVVSV and FAVLMWLLTYVGALFNGLTLL.

As to quaternary structure, interacts with NDRG1. Interacts with BACE1. Interacts with TMEM33. Post-translationally, phosphorylated.

It is found in the endoplasmic reticulum membrane. It localises to the golgi apparatus membrane. Inhibits amyloid precursor protein processing, probably by blocking BACE1 activity. In Pan troglodytes (Chimpanzee), this protein is Reticulon-1 (RTN1).